A 528-amino-acid chain; its full sequence is MCSLAAGNGRGAELGPEPLELSDSGDDAGWEDEDADTEPAHGRQHTPCLFCDRLFASAEETFSHCKLEHQFNIDSMVHKHGLEFYGYIKLINFIRLKNPTVEYMNSIYNPVPWEKDEYLKPVLEDDLLLQFDVEDLYEPVSTPFSYPNGLSESASVVEKLKHMEARALSAEAALARAREDLQKMKQFAQDFVMNVDVRTCSSTTTIADLQEDEDGVYFSSYGHYGIHEEMLKDKVRTESYRDFIYQNPHIFKDKVVLDVGCGTGILSMFAAKVGAKKVIAVDQSEILYQAMDIIRLNKLEDTIVLIKGKIEEVSLPVEKVDVIISEWMGYFLLFESMLDSVLYAKSKYLAKGGSVYPDICTISLVAVSDVSKHADRIAFWDDVYGFNMSCMKKAVIPEAVVEVVDHKTLISDPCDIKHIDCHTTSISDLEFSSDFTLRTTKTAMCTAVAGYFDIYFEKNCHNRVVFSTGPQSTKTHWKQTVFLLEKPFPVKAGEALKGKITVHKNKKDPRSLIVTLTLNSSTQTYSLQ.

Residues 1 to 43 form a disordered region; sequence MCSLAAGNGRGAELGPEPLELSDSGDDAGWEDEDADTEPAHGR. Position 2 is an N-acetylcysteine (cysteine 2). Phosphoserine occurs at positions 22 and 24. Residues 23-37 show a composition bias toward acidic residues; it reads DSGDDAGWEDEDADT. Residues 46 to 69 form a C2H2-type zinc finger; that stretch reads TPCLFCDRLFASAEETFSHCKLEH. Serine 169 is subject to Phosphoserine. A mediates interaction with ALDH1A1 region spans residues 184 to 528; it reads MKQFAQDFVM…NSSTQTYSLQ (345 aa). Residues 214–528 enclose the SAM-dependent MTase PRMT-type domain; that stretch reads DGVYFSSYGH…NSSTQTYSLQ (315 aa). S-adenosyl-L-homocysteine-binding residues include arginine 236, glycine 260, aspartate 282, serine 284, isoleucine 310, and glutamate 311. Residues glutamate 326 and glutamate 335 contribute to the active site.

This sequence belongs to the class I-like SAM-binding methyltransferase superfamily. Protein arginine N-methyltransferase family. As to quaternary structure, monomer and homodimer. Interacts with EPB41L3 (via FERM domain); the interaction is direct and inhibits the protein-arginine N-methyltransferase activity of PRMT3. Interacts with the 40S ribosomal protein RPS2. Interacts with ALDH1A1; the interaction is direct, inhibits ALDH1A1 aldehyde dehydrogenase activity and is independent of the methyltransferase activity of PRMT3.

Its subcellular location is the cytoplasm. It is found in the cytosol. The protein resides in the nucleus. It carries out the reaction L-arginyl-[protein] + S-adenosyl-L-methionine = N(omega)-methyl-L-arginyl-[protein] + S-adenosyl-L-homocysteine + H(+). The enzyme catalyses L-arginyl-[protein] + 2 S-adenosyl-L-methionine = N(omega),N(omega)-dimethyl-L-arginyl-[protein] + 2 S-adenosyl-L-homocysteine + 2 H(+). Inhibited by N-ethylmaleimide and high concentrations of zinc chloride. In terms of biological role, protein-arginine N-methyltransferase that catalyzes both the monomethylation and asymmetric dimethylation of the guanidino nitrogens of arginine residues in target proteins, and therefore falls into the group of type I methyltransferases. Catalyzes the asymmetric arginine dimethylation at multiple sites in the Arg/Gly-rich region of small ribosomal subunit protein uS5/RPS2. Also appears to methylate other ribosomal proteins. May regulate retinoic acid synthesis and signaling by inhibiting ALDH1A1 retinal dehydrogenase activity. Contributes to methylation of histone H4 'Arg-3', a specific tag for epigenetic transcriptional activation. Promotes osteogenesis. The chain is Protein arginine N-methyltransferase 3 from Mus musculus (Mouse).